The sequence spans 450 residues: Probable ECA polymerase (450 aa).

A run of 11 helical transmembrane segments spans residues 6 to 26 (FSGL…LTWF), 37 to 57 (VFFS…TSVL), 63 to 83 (VGVA…CFYA), 118 to 138 (VILM…NGFL), 155 to 175 (GVAL…VYFL), 181 to 201 (AWLF…MIVG), 207 to 227 (IIIA…ISLW), 228 to 248 (MLAA…LKRY), 341 to 361 (LVVM…GLII), 378 to 398 (YKAA…IVLA), and 410 to 430 (VFFI…YWLF).

The protein belongs to the WzyE family. As to quaternary structure, probably part of a complex composed of WzxE, WzyE and WzzE.

It is found in the cell inner membrane. It participates in bacterial outer membrane biogenesis; enterobacterial common antigen biosynthesis. In terms of biological role, probably involved in the polymerization of enterobacterial common antigen (ECA) trisaccharide repeat units. This is Probable ECA polymerase from Shigella boydii serotype 18 (strain CDC 3083-94 / BS512).